Reading from the N-terminus, the 364-residue chain is Pre-small/secreted glycoprotein (364 aa).

A signal peptide spans M1 to S32. N-linked (GlcNAc...) asparagine; by host glycosylation occurs at N40. Cystine bridges form between C108–C135 and C121–C147. 5 N-linked (GlcNAc...) asparagine; by host glycosylation sites follow: N204, N228, N238, N257, and N268.

The protein belongs to the filoviruses glycoprotein family. In terms of assembly, homodimer; disulfide-linked. The homodimers are linked by two disulfide bonds in a parallel orientation. As to quaternary structure, monomer. In terms of processing, this precursor is processed into mature sGP and delta-peptide by host furin or furin-like proteases. The cleavage site corresponds to the furin optimal cleavage sequence [KR]-X-[KR]-R. Post-translationally, N-glycosylated. O-glycosylated.

The protein localises to the secreted. Its function is as follows. Seems to possess an anti-inflammatory activity as it can reverse the barrier-decreasing effects of TNF alpha. Might therefore contribute to the lack of inflammatory reaction seen during infection in spite the of extensive necrosis and massive virus production. Does not seem to be involved in activation of primary macrophages. Does not seem to interact specifically with neutrophils. In terms of biological role, viroporin that permeabilizes mammalian cell plasma membranes. It acts by altering permeation of ionic compounds and small molecules. This activity may lead to viral enterotoxic activity. This chain is Pre-small/secreted glycoprotein (GP), found in Epomops franqueti (Franquet's epauletted fruit bat).